The sequence spans 912 residues: Probable transmembrane GTPase FZO-like, chloroplastic (912 aa).

Residues 1 to 54 constitute a chloroplast transit peptide; that stretch reads MRTLISHRQCVTSPFLISAASPPFPGRCFKLSSFTPPRHRRFSSLSIRNISHES. The disordered stretch occupies residues 51–71; sequence SHESADQTSSSRPRTLYPGGY. Residues 55-773 lie on the Stromal side of the membrane; that stretch reads ADQTSSSRPR…SKRLEQDIRE (719 aa). GTP is bound by residues 359 to 364 and S521; that span reads NSGKST. A helical membrane pass occupies residues 774–794; sequence VFFVTVGGLGAAGLSASLLTS. Residues 795–801 lie on the Chloroplast intermembrane side of the membrane; it reads VLPTTLE. A helical transmembrane segment spans residues 802-822; the sequence is DLLALGLCSAGGYVAIANFPY. The Stromal segment spans residues 823-912; sequence RRQAIIGKVN…LHVSRDEMRL (90 aa). A coiled-coil region spans residues 877–904; the sequence is DRLLGIQKELSDIRSKLQLLQVDIDNLH.

The protein belongs to the TRAFAC class dynamin-like GTPase superfamily. Dynamin/Fzo/YdjA family. Mitofusin subfamily.

Its subcellular location is the plastid. It is found in the chloroplast inner membrane. The protein resides in the chloroplast thylakoid membrane. Probable membrane-remodeling GTPase that plays a unique role in the in the determination of thylakoid and chloroplast morphology and regulates organization of the thylakoid network. Not involved in the determination of mitochondrial morphology or ultrastructure. In Arabidopsis thaliana (Mouse-ear cress), this protein is Probable transmembrane GTPase FZO-like, chloroplastic.